A 313-amino-acid polypeptide reads, in one-letter code: UDP-N-acetylenolpyruvoylglucosamine reductase (313 aa).

Positions 31–207 (VGGPADALVA…TGVDLGLGFD (177 aa)) constitute an FAD-binding PCMH-type domain. Arg-180 is an active-site residue. Cys-236 functions as the Proton donor in the catalytic mechanism. The active site involves Glu-307.

This sequence belongs to the MurB family. Requires FAD as cofactor.

The protein localises to the cytoplasm. The catalysed reaction is UDP-N-acetyl-alpha-D-muramate + NADP(+) = UDP-N-acetyl-3-O-(1-carboxyvinyl)-alpha-D-glucosamine + NADPH + H(+). The protein operates within cell wall biogenesis; peptidoglycan biosynthesis. Functionally, cell wall formation. This chain is UDP-N-acetylenolpyruvoylglucosamine reductase, found in Desulfosudis oleivorans (strain DSM 6200 / JCM 39069 / Hxd3) (Desulfococcus oleovorans).